Here is a 140-residue protein sequence, read N- to C-terminus: MKMFKSLSQLPRIVSPFQKCYSTDLISLVGIPRVKITKGQNRYLLVNIHTHGFTKYGRVIVRGADVDNHLTVFDSILEELEPQGICAKILGGGRILNEADSKKMKIYGTSRTFGSADHTRTRNILHSWTTYKDFKITVKN.

Arg-42 is a substrate binding site. His-69 functions as the Proton acceptor in the catalytic mechanism. 110 to 112 (SRT) serves as a coordination point for substrate.

It belongs to the janus family.

JanA and janB regulate somatic sex differentiation. This chain is Sex-regulated protein janus-B (janB), found in Drosophila yakuba (Fruit fly).